A 137-amino-acid polypeptide reads, in one-letter code: Protein MesC (137 aa).

The sequence is that of Protein MesC (mesC) from Leuconostoc mesenteroides.